Consider the following 338-residue polypeptide: uncharacterized protein (338 aa).

The next 3 membrane-spanning stretches (helical) occupy residues 11–31 (ILSL…TFAI), 249–269 (IAVF…IIPA), and 318–338 (VPTP…GLGL).

It is found in the cell membrane. This is an uncharacterized protein from Methanocaldococcus jannaschii (strain ATCC 43067 / DSM 2661 / JAL-1 / JCM 10045 / NBRC 100440) (Methanococcus jannaschii).